Reading from the N-terminus, the 376-residue chain is Chaperone protein DnaJ (376 aa).

One can recognise a J domain in the interval 5–70 (DYYEVLGVAK…QKRAAYDQYG (66 aa)). Residues 136 to 214 (GYDTQIRVPS…CHGSGKVKET (79 aa)) form a CR-type zinc finger. Zn(2+)-binding residues include Cys149, Cys152, Cys166, Cys169, Cys188, Cys191, Cys202, and Cys205. 4 CXXCXGXG motif repeats span residues 149 to 156 (CGVCHGSG), 166 to 173 (CPTCHGQG), 188 to 195 (CPKCHGTG), and 202 to 209 (CAHCHGSG).

The protein belongs to the DnaJ family. Homodimer. Zn(2+) is required as a cofactor.

Its subcellular location is the cytoplasm. Participates actively in the response to hyperosmotic and heat shock by preventing the aggregation of stress-denatured proteins and by disaggregating proteins, also in an autonomous, DnaK-independent fashion. Unfolded proteins bind initially to DnaJ; upon interaction with the DnaJ-bound protein, DnaK hydrolyzes its bound ATP, resulting in the formation of a stable complex. GrpE releases ADP from DnaK; ATP binding to DnaK triggers the release of the substrate protein, thus completing the reaction cycle. Several rounds of ATP-dependent interactions between DnaJ, DnaK and GrpE are required for fully efficient folding. Also involved, together with DnaK and GrpE, in the DNA replication of plasmids through activation of initiation proteins. The sequence is that of Chaperone protein DnaJ from Burkholderia mallei (strain NCTC 10229).